Reading from the N-terminus, the 85-residue chain is Toxin BmKa3 (85 aa).

A signal peptide spans 1 to 19 (MNYLVFFSLALLLMTGVES). One can recognise an LCN-type CS-alpha/beta domain in the interval 21–83 (RDGYIADDKN…VPIRVPGKCN (63 aa)). Cystine bridges form between cysteine 31-cysteine 82, cysteine 35-cysteine 55, cysteine 41-cysteine 65, and cysteine 45-cysteine 67.

Belongs to the long (4 C-C) scorpion toxin superfamily. Sodium channel inhibitor family. Alpha subfamily. Expressed by the venom gland.

Its subcellular location is the secreted. In terms of biological role, alpha toxins bind voltage-independently at site-3 of sodium channels (Nav) and inhibit the inactivation of the activated channels, thereby blocking neuronal transmission. In Olivierus martensii (Manchurian scorpion), this protein is Toxin BmKa3.